The sequence spans 159 residues: Ribosomal RNA large subunit methyltransferase H (159 aa).

Residues Leu-76, Gly-108, and 127–132 (FGLLTL) contribute to the S-adenosyl-L-methionine site.

The protein belongs to the RNA methyltransferase RlmH family. In terms of assembly, homodimer.

It localises to the cytoplasm. It catalyses the reaction pseudouridine(1915) in 23S rRNA + S-adenosyl-L-methionine = N(3)-methylpseudouridine(1915) in 23S rRNA + S-adenosyl-L-homocysteine + H(+). Functionally, specifically methylates the pseudouridine at position 1915 (m3Psi1915) in 23S rRNA. The chain is Ribosomal RNA large subunit methyltransferase H from Streptococcus agalactiae serotype Ia (strain ATCC 27591 / A909 / CDC SS700).